The chain runs to 269 residues: Indole-3-glycerol phosphate synthase (269 aa).

This sequence belongs to the TrpC family.

It catalyses the reaction 1-(2-carboxyphenylamino)-1-deoxy-D-ribulose 5-phosphate + H(+) = (1S,2R)-1-C-(indol-3-yl)glycerol 3-phosphate + CO2 + H2O. It functions in the pathway amino-acid biosynthesis; L-tryptophan biosynthesis; L-tryptophan from chorismate: step 4/5. The protein is Indole-3-glycerol phosphate synthase of Rhodococcus opacus (strain B4).